The following is a 130-amino-acid chain: Small ribosomal subunit protein uS9 (130 aa).

It belongs to the universal ribosomal protein uS9 family.

The sequence is that of Small ribosomal subunit protein uS9 from Paraburkholderia phytofirmans (strain DSM 17436 / LMG 22146 / PsJN) (Burkholderia phytofirmans).